The sequence spans 242 residues: Biosynthetic peptidoglycan transglycosylase (242 aa).

Residues 19-39 (ILAALAVFWGGGIALFSVVPV) traverse the membrane as a helical segment.

It belongs to the glycosyltransferase 51 family.

The protein localises to the cell inner membrane. It carries out the reaction [GlcNAc-(1-&gt;4)-Mur2Ac(oyl-L-Ala-gamma-D-Glu-L-Lys-D-Ala-D-Ala)](n)-di-trans,octa-cis-undecaprenyl diphosphate + beta-D-GlcNAc-(1-&gt;4)-Mur2Ac(oyl-L-Ala-gamma-D-Glu-L-Lys-D-Ala-D-Ala)-di-trans,octa-cis-undecaprenyl diphosphate = [GlcNAc-(1-&gt;4)-Mur2Ac(oyl-L-Ala-gamma-D-Glu-L-Lys-D-Ala-D-Ala)](n+1)-di-trans,octa-cis-undecaprenyl diphosphate + di-trans,octa-cis-undecaprenyl diphosphate + H(+). The protein operates within cell wall biogenesis; peptidoglycan biosynthesis. Functionally, peptidoglycan polymerase that catalyzes glycan chain elongation from lipid-linked precursors. The protein is Biosynthetic peptidoglycan transglycosylase of Salmonella paratyphi A (strain ATCC 9150 / SARB42).